The chain runs to 113 residues: Insulin-like peptide 02 (113 aa).

An N-terminal signal peptide occupies residues 1–22 (MFYLTFLLFGAICIGQIQLGQP). The propeptide occupies 23–42 (VKFKVNEDGHRPSVYPIKYR). Intrachain disulfides connect Cys-44–Cys-99, Cys-56–Cys-112, and Cys-98–Cys-103. A propeptide spans 62–87 (RRKRSIEADIITDKDTANSYFNRVKR) (c peptide).

Belongs to the insulin family.

It is found in the secreted. Its function is as follows. Insulin decreases blood glucose concentration. May have evolved to activate insulin receptors (INSR) in vertebrates. Molecular docking studies reveals unique interaction with the human insulin receptor. In vivo, insulin-like peptide injection reduces blood glucose levels in two models of zebrafish diabetes (streptozotocin- and glucose-induced). Also shorter swimming distance of zebrafish larvae, an effect which is not observed with human insulin. In Exaiptasia diaphana (Tropical sea anemone), this protein is Insulin-like peptide 02.